The chain runs to 285 residues: ATP phosphoribosyltransferase (285 aa).

It belongs to the ATP phosphoribosyltransferase family. Long subfamily. The cofactor is Mg(2+).

It localises to the cytoplasm. It carries out the reaction 1-(5-phospho-beta-D-ribosyl)-ATP + diphosphate = 5-phospho-alpha-D-ribose 1-diphosphate + ATP. Its pathway is amino-acid biosynthesis; L-histidine biosynthesis; L-histidine from 5-phospho-alpha-D-ribose 1-diphosphate: step 1/9. Feedback inhibited by histidine. Its function is as follows. Catalyzes the condensation of ATP and 5-phosphoribose 1-diphosphate to form N'-(5'-phosphoribosyl)-ATP (PR-ATP). Has a crucial role in the pathway because the rate of histidine biosynthesis seems to be controlled primarily by regulation of HisG enzymatic activity. The chain is ATP phosphoribosyltransferase from Streptomyces avermitilis (strain ATCC 31267 / DSM 46492 / JCM 5070 / NBRC 14893 / NCIMB 12804 / NRRL 8165 / MA-4680).